Here is a 309-residue protein sequence, read N- to C-terminus: Jacalin-related lectin 25 (309 aa).

Positions 8–190 (MFKVGPIGSQ…LTSIGIYVCP (183 aa)) constitute a Jacalin-type lectin domain.

Belongs to the jacalin lectin family.

This is Jacalin-related lectin 25 (JAL25) from Arabidopsis thaliana (Mouse-ear cress).